Reading from the N-terminus, the 368-residue chain is Methionine import ATP-binding protein MetN (368 aa).

Residues Met1–Ala14 show a composition bias toward polar residues. The segment at Met1–Thr27 is disordered. A compositionally biased stretch (low complexity) spans Gly15–Thr27. Residues Ile31 to Val270 form the ABC transporter domain. Residue Gly67–Ser74 coordinates ATP.

This sequence belongs to the ABC transporter superfamily. Methionine importer (TC 3.A.1.24) family. In terms of assembly, the complex is composed of two ATP-binding proteins (MetN), two transmembrane proteins (MetI) and a solute-binding protein (MetQ).

Its subcellular location is the cell membrane. The enzyme catalyses L-methionine(out) + ATP + H2O = L-methionine(in) + ADP + phosphate + H(+). It carries out the reaction D-methionine(out) + ATP + H2O = D-methionine(in) + ADP + phosphate + H(+). Its function is as follows. Part of the ABC transporter complex MetNIQ involved in methionine import. Responsible for energy coupling to the transport system. This Corynebacterium jeikeium (strain K411) protein is Methionine import ATP-binding protein MetN.